Here is a 346-residue protein sequence, read N- to C-terminus: Nicotinate-nucleotide--dimethylbenzimidazole phosphoribosyltransferase (346 aa).

Residue Glu-313 is the Proton acceptor of the active site.

It belongs to the CobT family.

The catalysed reaction is 5,6-dimethylbenzimidazole + nicotinate beta-D-ribonucleotide = alpha-ribazole 5'-phosphate + nicotinate + H(+). The protein operates within nucleoside biosynthesis; alpha-ribazole biosynthesis; alpha-ribazole from 5,6-dimethylbenzimidazole: step 1/2. In terms of biological role, catalyzes the synthesis of alpha-ribazole-5'-phosphate from nicotinate mononucleotide (NAMN) and 5,6-dimethylbenzimidazole (DMB). This chain is Nicotinate-nucleotide--dimethylbenzimidazole phosphoribosyltransferase, found in Parabacteroides distasonis (strain ATCC 8503 / DSM 20701 / CIP 104284 / JCM 5825 / NCTC 11152).